A 237-amino-acid polypeptide reads, in one-letter code: 5'-methylthioadenosine/S-adenosylhomocysteine nucleosidase (237 aa).

Catalysis depends on Glu12, which acts as the Proton acceptor. Residues Ala78, Ile152, and 173–174 (ME) each bind substrate. Residue Asp197 is the Proton donor of the active site.

It belongs to the PNP/UDP phosphorylase family. MtnN subfamily. Homodimer.

It catalyses the reaction S-adenosyl-L-homocysteine + H2O = S-(5-deoxy-D-ribos-5-yl)-L-homocysteine + adenine. It carries out the reaction S-methyl-5'-thioadenosine + H2O = 5-(methylsulfanyl)-D-ribose + adenine. The enzyme catalyses 5'-deoxyadenosine + H2O = 5-deoxy-D-ribose + adenine. The protein operates within amino-acid biosynthesis; L-methionine biosynthesis via salvage pathway; S-methyl-5-thio-alpha-D-ribose 1-phosphate from S-methyl-5'-thioadenosine (hydrolase route): step 1/2. Its function is as follows. Catalyzes the irreversible cleavage of the glycosidic bond in both 5'-methylthioadenosine (MTA) and S-adenosylhomocysteine (SAH/AdoHcy) to adenine and the corresponding thioribose, 5'-methylthioribose and S-ribosylhomocysteine, respectively. Also cleaves 5'-deoxyadenosine, a toxic by-product of radical S-adenosylmethionine (SAM) enzymes, into 5-deoxyribose and adenine. Thus, is required for in vivo function of the radical SAM enzymes biotin synthase and lipoic acid synthase, that are inhibited by 5'-deoxyadenosine accumulation. The protein is 5'-methylthioadenosine/S-adenosylhomocysteine nucleosidase of Hamiltonella defensa subsp. Acyrthosiphon pisum (strain 5AT).